A 437-amino-acid chain; its full sequence is Nuclear envelope integral membrane protein 1 (437 aa).

The N-terminal stretch at 1–44 is a signal peptide; it reads MAGGIKVSVWSAVGPGPRCWGAGGGGGATWLLLVVAGCVVCGSA. A glycan (N-linked (GlcNAc...) asparagine) is linked at Asn-123. Helical transmembrane passes span 159–179, 183–203, 214–234, 244–264, and 288–308; these read PKLF…DLLS, IFYY…IVIF, PIYV…QLVF, YWHY…AVCY, and GLMY…VIAL. Residues 184–295 are a; required for its colocalization with lamins at the nuclear envelope; it reads FYYSTGMSVG…GLGLMYSSIQ (112 aa). Residues 334 to 403 are b; required for interaction with RAN-GTP; it reads PVPPRLLTEE…LTPNEVSVHE (70 aa). Residues 334–437 form a required for nuclear localization region; it reads PVPPRLLTEE…PTFTQNNFLT (104 aa). Residues Ser-366, Ser-419, and Ser-420 each carry the phosphoserine modification. Acidic residues predominate over residues 415–425; the sequence is DEELSSEEEGS. The disordered stretch occupies residues 415-437; sequence DEELSSEEEGSEYPTFTQNNFLT. A compositionally biased stretch (polar residues) spans 428 to 437; it reads PTFTQNNFLT.

Belongs to the NEMP family. Homooligomer. Interacts with RAN-GTP. Interacts with EMD. Phosphorylated. Phosphorylation may regulate its interaction with RAN-GTP. In the ovary, expression is strongest in primordial follicle oocytes and rapidly declines as oocytes mature and move from the cortex (at protein level).

It localises to the nucleus inner membrane. The protein localises to the nucleus envelope. Functionally, together with EMD, contributes to nuclear envelope stiffness in germ cells. Required for female fertility. Essential for normal erythropoiesis. Required for efficient nuclear envelope opening and enucleation during the late stages of erythroblast maturation. The chain is Nuclear envelope integral membrane protein 1 (Nemp1) from Mus musculus (Mouse).